The primary structure comprises 362 residues: Cobalt-precorrin-5B C(1)-methyltransferase (362 aa).

Belongs to the CbiD family.

The enzyme catalyses Co-precorrin-5B + S-adenosyl-L-methionine = Co-precorrin-6A + S-adenosyl-L-homocysteine. It participates in cofactor biosynthesis; adenosylcobalamin biosynthesis; cob(II)yrinate a,c-diamide from sirohydrochlorin (anaerobic route): step 6/10. In terms of biological role, catalyzes the methylation of C-1 in cobalt-precorrin-5B to form cobalt-precorrin-6A. The polypeptide is Cobalt-precorrin-5B C(1)-methyltransferase (Geobacter sulfurreducens (strain ATCC 51573 / DSM 12127 / PCA)).